A 260-amino-acid chain; its full sequence is Pyridoxine 5'-phosphate synthase (260 aa).

A 3-amino-2-oxopropyl phosphate-binding site is contributed by Asn-15. A 1-deoxy-D-xylulose 5-phosphate-binding site is contributed by 17 to 18 (DH). 3-amino-2-oxopropyl phosphate is bound at residue Arg-26. His-51 serves as the catalytic Proton acceptor. 2 residues coordinate 1-deoxy-D-xylulose 5-phosphate: Arg-53 and His-58. Catalysis depends on Glu-78, which acts as the Proton acceptor. Thr-108 is a 1-deoxy-D-xylulose 5-phosphate binding site. The Proton donor role is filled by His-199. Residues Gly-200 and 221–222 (GH) each bind 3-amino-2-oxopropyl phosphate.

It belongs to the PNP synthase family. As to quaternary structure, homooctamer; tetramer of dimers.

Its subcellular location is the cytoplasm. The enzyme catalyses 3-amino-2-oxopropyl phosphate + 1-deoxy-D-xylulose 5-phosphate = pyridoxine 5'-phosphate + phosphate + 2 H2O + H(+). The protein operates within cofactor biosynthesis; pyridoxine 5'-phosphate biosynthesis; pyridoxine 5'-phosphate from D-erythrose 4-phosphate: step 5/5. Its function is as follows. Catalyzes the complicated ring closure reaction between the two acyclic compounds 1-deoxy-D-xylulose-5-phosphate (DXP) and 3-amino-2-oxopropyl phosphate (1-amino-acetone-3-phosphate or AAP) to form pyridoxine 5'-phosphate (PNP) and inorganic phosphate. This chain is Pyridoxine 5'-phosphate synthase, found in Cupriavidus taiwanensis (strain DSM 17343 / BCRC 17206 / CCUG 44338 / CIP 107171 / LMG 19424 / R1) (Ralstonia taiwanensis (strain LMG 19424)).